A 141-amino-acid chain; its full sequence is Putative pre-16S rRNA nuclease (141 aa).

The protein belongs to the YqgF nuclease family.

It is found in the cytoplasm. Could be a nuclease involved in processing of the 5'-end of pre-16S rRNA. This is Putative pre-16S rRNA nuclease from Acetivibrio thermocellus (strain ATCC 27405 / DSM 1237 / JCM 9322 / NBRC 103400 / NCIMB 10682 / NRRL B-4536 / VPI 7372) (Clostridium thermocellum).